The sequence spans 151 residues: MASLNCRTAVCVVCLEKPKYRCPTCRVPYCSVPCFQKHKEQCSSEARPVEKRRAGPPVRSEESKDDDSSVADFLNSDEEEDRVSLQNLKNLGESETLRSLLLNPHLRQLMISLDQGDNKAKLMRACMQEPLFVEFADCCLGIVEPSQKRDS.

Zn(2+)-binding residues include Cys11, Cys14, Cys22, Cys25, Cys30, Cys34, His38, and Cys42. The HIT-type zinc-finger motif lies at 11-42 (CVVCLEKPKYRCPTCRVPYCSVPCFQKHKEQC). Residues 43 to 53 (SSEARPVEKRR) are compositionally biased toward basic and acidic residues. The disordered stretch occupies residues 43–81 (SSEARPVEKRRAGPPVRSEESKDDDSSVADFLNSDEEED). The segment covering 63-81 (SKDDDSSVADFLNSDEEED) has biased composition (acidic residues). Position 76 is a phosphoserine (Ser76).

As to quaternary structure, thyroid receptor interacting proteins (TRIPs) specifically interact with the ligand binding domain of the thyroid receptor (TR). Requires the presence of thyroid hormone for its interaction. Interacts with NUFIP1. Interacts (via HIT-type zinc finger) with the RUVBL1/RUVBL2 complex in the presence of ADP. In terms of tissue distribution, expressed in the cerebellum.

The protein resides in the cytoplasm. The protein localises to the nucleus. This is Zinc finger HIT domain-containing protein 3 (Znhit3) from Mus musculus (Mouse).